A 119-amino-acid polypeptide reads, in one-letter code: Large ribosomal subunit protein bL20 (119 aa).

This sequence belongs to the bacterial ribosomal protein bL20 family.

Its function is as follows. Binds directly to 23S ribosomal RNA and is necessary for the in vitro assembly process of the 50S ribosomal subunit. It is not involved in the protein synthesizing functions of that subunit. This is Large ribosomal subunit protein bL20 from Bradyrhizobium sp. (strain ORS 278).